Reading from the N-terminus, the 286-residue chain is Polyamine aminopropyltransferase (286 aa).

A PABS domain is found at 5–242; that stretch reads DNWFTEVLEE…GWWSATLASK (238 aa). An S-methyl-5'-thioadenosine-binding site is contributed by glutamine 35. Residues histidine 66 and aspartate 90 each coordinate spermidine. Residues aspartate 110 and 141-142 contribute to the S-methyl-5'-thioadenosine site; that span reads DG. The active-site Proton acceptor is aspartate 160. 160 to 163 is a spermidine binding site; that stretch reads DSTD.

The protein belongs to the spermidine/spermine synthase family. As to quaternary structure, homodimer or homotetramer.

It localises to the cytoplasm. It catalyses the reaction S-adenosyl 3-(methylsulfanyl)propylamine + putrescine = S-methyl-5'-thioadenosine + spermidine + H(+). It functions in the pathway amine and polyamine biosynthesis; spermidine biosynthesis; spermidine from putrescine: step 1/1. In terms of biological role, catalyzes the irreversible transfer of a propylamine group from the amino donor S-adenosylmethioninamine (decarboxy-AdoMet) to putrescine (1,4-diaminobutane) to yield spermidine. This is Polyamine aminopropyltransferase from Alkalilimnicola ehrlichii (strain ATCC BAA-1101 / DSM 17681 / MLHE-1).